Reading from the N-terminus, the 223-residue chain is Endonuclease V (223 aa).

Mg(2+) contacts are provided by Asp35 and Asp103.

This sequence belongs to the endonuclease V family. It depends on Mg(2+) as a cofactor.

Its subcellular location is the cytoplasm. It catalyses the reaction Endonucleolytic cleavage at apurinic or apyrimidinic sites to products with a 5'-phosphate.. In terms of biological role, DNA repair enzyme involved in the repair of deaminated bases. Selectively cleaves double-stranded DNA at the second phosphodiester bond 3' to a deoxyinosine leaving behind the intact lesion on the nicked DNA. This is Endonuclease V from Escherichia coli O45:K1 (strain S88 / ExPEC).